Here is an 858-residue protein sequence, read N- to C-terminus: DNA mismatch repair protein MutS (858 aa).

Position 603 to 610 (603 to 610 (GPNMSGKS)) interacts with ATP.

This sequence belongs to the DNA mismatch repair MutS family.

In terms of biological role, this protein is involved in the repair of mismatches in DNA. It is possible that it carries out the mismatch recognition step. This protein has a weak ATPase activity. This chain is DNA mismatch repair protein MutS, found in Streptococcus agalactiae serotype Ia (strain ATCC 27591 / A909 / CDC SS700).